The sequence spans 1403 residues: Perilipin-4 (1403 aa).

The segment at M1 to S21 is disordered. A phosphoserine mark is found at S25 and S31. The segment at R33–M70 is disordered. A run of 29 repeats spans residues G104–G136, G137–T169, G170–T202, G203–T235, G236–T268, G269–A301, G302–T334, G335–T367, G368–A400, G401–T433, G434–T466, G467–T499, G500–T532, G533–A565, G566–T598, G599–T631, G632–T664, G665–A697, G698–T730, G731–T763, G764–A796, G797–T829, G830–T862, G863–A895, G896–T928, G929–T961, G962–A994, G995–G1027, and T1028–G1060. Residues G104 to G1060 are 29 X 33 AA approximate tandem repeat. A Phosphoserine modification is found at S1281. Position 1287 is a phosphothreonine (T1287).

The protein belongs to the perilipin family. As to expression, specifically expressed in white adipose tissue and also weakly detected in heart and skeletal muscle (at protein level).

The protein resides in the cell membrane. The protein localises to the cytoplasm. Its subcellular location is the lipid droplet. May play a role in triacylglycerol packaging into adipocytes. May function as a coat protein involved in the biogenesis of lipid droplets. The protein is Perilipin-4 (Plin4) of Mus musculus (Mouse).